Consider the following 569-residue polypeptide: Mitogen-activated protein kinase 8 (569 aa).

In terms of domain architecture, Protein kinase spans 13 to 304 (YKIQEVIGKG…AEEALADPYF (292 aa)). ATP-binding positions include 19–27 (IGKGSYGVV) and K42. D139 acts as the Proton acceptor in catalysis. A Phosphothreonine modification is found at T175. The TXY signature appears at 175 to 177 (TDY). Y177 is subject to Phosphotyrosine. The segment at 404-432 (TTVHSAPIPPKDHQNITSQVPQRIPGRTG) is disordered.

It belongs to the protein kinase superfamily. CMGC Ser/Thr protein kinase family. MAP kinase subfamily. In terms of processing, dually phosphorylated on Thr-175 and Tyr-177, which activates the enzyme. As to expression, expressed in leaves and panicles.

The catalysed reaction is L-seryl-[protein] + ATP = O-phospho-L-seryl-[protein] + ADP + H(+). It catalyses the reaction L-threonyl-[protein] + ATP = O-phospho-L-threonyl-[protein] + ADP + H(+). With respect to regulation, activated by threonine and tyrosine phosphorylation. The polypeptide is Mitogen-activated protein kinase 8 (MPK8) (Oryza sativa subsp. japonica (Rice)).